Here is a 151-residue protein sequence, read N- to C-terminus: Small ribosomal subunit protein uS15 (151 aa).

Belongs to the universal ribosomal protein uS15 family.

This is Small ribosomal subunit protein uS15 (RPS13) from Wuchereria bancrofti.